Reading from the N-terminus, the 118-residue chain is MATATTKAKATERIKMRIRKGDTVQVIAGKDKGKTGAVLRTLPNENRVVVEGVNMRTRHEKPTQEGETGRIVTEEASLHASNVMLYSTDKKVASRVEIVVEKDGTKKRRLKKTGEVLD.

Belongs to the universal ribosomal protein uL24 family. As to quaternary structure, part of the 50S ribosomal subunit.

In terms of biological role, one of two assembly initiator proteins, it binds directly to the 5'-end of the 23S rRNA, where it nucleates assembly of the 50S subunit. Its function is as follows. One of the proteins that surrounds the polypeptide exit tunnel on the outside of the subunit. In Synechococcus sp. (strain CC9605), this protein is Large ribosomal subunit protein uL24.